Consider the following 355-residue polypeptide: Lipoyl synthase (355 aa).

The region spanning 7-55 (HLSKFAYREEFAGNTEVLATAAYKEDCADASTGLTPKLPLEVEFGKMSK) is the RPE1 insert domain. Positions 86, 91, 97, 112, 116, 119, and 325 each coordinate [4Fe-4S] cluster. The Radical SAM core domain occupies 98-314 (WSKKHATVMI…ERVARTKGFL (217 aa)).

Belongs to the radical SAM superfamily. Lipoyl synthase family. [4Fe-4S] cluster is required as a cofactor.

Its subcellular location is the cytoplasm. The enzyme catalyses [[Fe-S] cluster scaffold protein carrying a second [4Fe-4S](2+) cluster] + N(6)-octanoyl-L-lysyl-[protein] + 2 oxidized [2Fe-2S]-[ferredoxin] + 2 S-adenosyl-L-methionine + 4 H(+) = [[Fe-S] cluster scaffold protein] + N(6)-[(R)-dihydrolipoyl]-L-lysyl-[protein] + 4 Fe(3+) + 2 hydrogen sulfide + 2 5'-deoxyadenosine + 2 L-methionine + 2 reduced [2Fe-2S]-[ferredoxin]. It participates in protein modification; protein lipoylation via endogenous pathway; protein N(6)-(lipoyl)lysine from octanoyl-[acyl-carrier-protein]: step 2/2. In terms of biological role, catalyzes the radical-mediated insertion of two sulfur atoms into the C-6 and C-8 positions of the octanoyl moiety bound to the lipoyl domains of lipoate-dependent enzymes, thereby converting the octanoylated domains into lipoylated derivatives. The chain is Lipoyl synthase from Rickettsia bellii (strain RML369-C).